The primary structure comprises 145 residues: Large ribosomal subunit protein uL11 (145 aa).

This sequence belongs to the universal ribosomal protein uL11 family. As to quaternary structure, part of the ribosomal stalk of the 50S ribosomal subunit. Interacts with L10 and the large rRNA to form the base of the stalk. L10 forms an elongated spine to which L12 dimers bind in a sequential fashion forming a multimeric L10(L12)X complex. In terms of processing, one or more lysine residues are methylated.

Forms part of the ribosomal stalk which helps the ribosome interact with GTP-bound translation factors. The chain is Large ribosomal subunit protein uL11 from Francisella philomiragia subsp. philomiragia (strain ATCC 25017 / CCUG 19701 / FSC 153 / O#319-036).